Here is a 593-residue protein sequence, read N- to C-terminus: Lipolysis-stimulated lipoprotein receptor (593 aa).

An N-terminal signal peptide occupies residues 1–35; the sequence is MAPAAGACAGAPDSHPATVVFVCLFLIIFCPDPAS. Over 36–206 the chain is Extracellular; the sequence is AIQVTVSDPY…PGFRAGPLED (171 aa). Residues 89-181 form the Ig-like V-type domain; that stretch reads PASVDNQLNA…DLDGNNEAYA (93 aa). Cysteine 113 and cysteine 165 form a disulfide bridge. Residues 207 to 227 form a helical membrane-spanning segment; sequence WLFVVVVCLASLLLFLLLGIC. The Cytoplasmic segment spans residues 228 to 593; sequence WCQCCPHTCC…LALSRESLVV (366 aa). Threonine 283 carries the phosphothreonine modification. 5 positions are modified to phosphoserine: serine 308, serine 314, serine 332, serine 375, and serine 379. The segment covering 375–387 has biased composition (basic and acidic residues); that stretch reads SEVTSLHEDDWRS. Residues 375–578 are disordered; that stretch reads SEVTSLHEDD…ETDSQASRER (204 aa). Phosphothreonine is present on threonine 396. 3 positions are modified to phosphoserine: serine 407, serine 410, and serine 436. Residues 435–444 are compositionally biased toward basic and acidic residues; it reads RSVDALDDIN. The span at 445–460 shows a compositional bias: low complexity; the sequence is RPGSTESGRSSPPSSG. Serine 471 and serine 473 each carry phosphoserine. The segment covering 472-550 has biased composition (basic and acidic residues); that stretch reads RSRDDLYDPD…GSGERRRVYR (79 aa). The residue at position 478 (tyrosine 478) is a Phosphotyrosine. Position 575 is a phosphoserine (serine 575). Lysine 582 participates in a covalent cross-link: Glycyl lysine isopeptide (Lys-Gly) (interchain with G-Cter in ubiquitin). Serine 587 and serine 590 each carry phosphoserine.

It belongs to the immunoglobulin superfamily. LISCH7 family. Homotrimer or homotetramer constituted of isoform 1 and/or isoform 2 and isoform 3. Assembles into cell-cell contacts. Interacts (via the cytoplasmic domain) with MARVELD2 (via C-terminal cytoplasmic domain); the interaction is required to recruit MARVELD2 to tricellular contacts. Interacts with OCLN. Phosphorylation at Ser-308 by MAPK8/JNK1 and MAPK9/JNK2 may be required for exclusive localization at tricellular tight junstions. In terms of processing, polyubiquitinated at Lys-582 via 'Lys-63'-linked ubiquitin chains; deubiquitinated by USP53. As to expression, specifically expressed in liver. Also detected in kidney and lung.

It localises to the cell membrane. The protein resides in the cell junction. The protein localises to the tight junction. In terms of biological role, probable role in the clearance of triglyceride-rich lipoprotein from blood. Binds chylomicrons, LDL and VLDL in presence of free fatty acids and allows their subsequent uptake in the cells. Maintains epithelial barrier function by recruiting MARVELD2/tricellulin to tricellular tight junctions. The sequence is that of Lipolysis-stimulated lipoprotein receptor from Rattus norvegicus (Rat).